Reading from the N-terminus, the 715-residue chain is Probable serine/threonine-protein kinase mkcE (715 aa).

Disordered regions lie at residues M1–Q125, Q228–T330, and G366–P385. Residues Y42–G53 are compositionally biased toward gly residues. Low complexity-rich tracts occupy residues S54 to N70 and S80 to Q125. Positions T207–I241 form a coiled coil. The segment covering V367 to S378 has biased composition (low complexity). Residues R427–I683 form the Protein kinase domain. ATP contacts are provided by residues E433–V441 and K459. D550 (proton acceptor) is an active-site residue.

It belongs to the protein kinase superfamily. STE Ser/Thr protein kinase family. STE20 subfamily. Mg(2+) serves as cofactor.

It catalyses the reaction L-seryl-[protein] + ATP = O-phospho-L-seryl-[protein] + ADP + H(+). The catalysed reaction is L-threonyl-[protein] + ATP = O-phospho-L-threonyl-[protein] + ADP + H(+). The polypeptide is Probable serine/threonine-protein kinase mkcE (Dictyostelium discoideum (Social amoeba)).